The chain runs to 685 residues: Diphthine--ammonia ligase (685 aa).

This sequence in the C-terminal section; belongs to the RutC family. It in the N-terminal section; belongs to the Diphthine--ammonia ligase family. In terms of assembly, interacts with elongation factor 2 (eEF-2; EFT1 or EFT2).

It is found in the cytoplasm. It carries out the reaction diphthine-[translation elongation factor 2] + NH4(+) + ATP = diphthamide-[translation elongation factor 2] + AMP + diphosphate + H(+). It participates in protein modification; peptidyl-diphthamide biosynthesis. Functionally, amidase that catalyzes the last step of diphthamide biosynthesis using ammonium and ATP. Diphthamide biosynthesis consists in the conversion of an L-histidine residue in the translation elongation factor eEF-2 (EFT1 or EFT2) to diphthamide. The sequence is that of Diphthine--ammonia ligase (DPH6) from Saccharomyces cerevisiae (strain ATCC 204508 / S288c) (Baker's yeast).